We begin with the raw amino-acid sequence, 72 residues long: UPF0154 protein LBA1278 (72 aa).

The helical transmembrane segment at 3-23 (LGLAIFLIIIALLVGATAGFY) threads the bilayer.

Belongs to the UPF0154 family.

Its subcellular location is the cell membrane. This Lactobacillus acidophilus (strain ATCC 700396 / NCK56 / N2 / NCFM) protein is UPF0154 protein LBA1278.